The sequence spans 307 residues: 2-dehydropantoate 2-reductase (307 aa).

NADP(+) is bound by residues 7–12 (GSGAMG), N102, and A128. N102 is a substrate binding site. K184 (proton donor) is an active-site residue. Substrate contacts are provided by N188, N192, and S255. Residue E268 participates in NADP(+) binding.

Belongs to the ketopantoate reductase family.

The protein localises to the cytoplasm. The catalysed reaction is (R)-pantoate + NADP(+) = 2-dehydropantoate + NADPH + H(+). It participates in cofactor biosynthesis; (R)-pantothenate biosynthesis; (R)-pantoate from 3-methyl-2-oxobutanoate: step 2/2. Catalyzes the NADPH-dependent reduction of ketopantoate into pantoic acid. This is 2-dehydropantoate 2-reductase (apbA) from Streptococcus pyogenes serotype M18 (strain MGAS8232).